The sequence spans 716 residues: 1,4-alpha-glucan branching enzyme GlgB (716 aa).

The active-site Nucleophile is Asp-394. Residue Glu-447 is the Proton donor of the active site.

It belongs to the glycosyl hydrolase 13 family. GlgB subfamily. In terms of assembly, monomer.

It carries out the reaction Transfers a segment of a (1-&gt;4)-alpha-D-glucan chain to a primary hydroxy group in a similar glucan chain.. Its pathway is glycan biosynthesis; glycogen biosynthesis. Its function is as follows. Catalyzes the formation of the alpha-1,6-glucosidic linkages in glycogen by scission of a 1,4-alpha-linked oligosaccharide from growing alpha-1,4-glucan chains and the subsequent attachment of the oligosaccharide to the alpha-1,6 position. This chain is 1,4-alpha-glucan branching enzyme GlgB, found in Photobacterium profundum (strain SS9).